A 428-amino-acid polypeptide reads, in one-letter code: Trigger factor (428 aa).

Residues Gly163 to Pro248 enclose the PPIase FKBP-type domain.

This sequence belongs to the FKBP-type PPIase family. Tig subfamily.

Its subcellular location is the cytoplasm. It catalyses the reaction [protein]-peptidylproline (omega=180) = [protein]-peptidylproline (omega=0). In terms of biological role, involved in protein export. Acts as a chaperone by maintaining the newly synthesized protein in an open conformation. Functions as a peptidyl-prolyl cis-trans isomerase. This is Trigger factor from Oceanobacillus iheyensis (strain DSM 14371 / CIP 107618 / JCM 11309 / KCTC 3954 / HTE831).